Consider the following 863-residue polypeptide: MSGRDNRGAGGGGGGGHHHQPLSSAMGKLKEKLTRAGEELGYHRVESNLSASNTGTSLDTILPEDPFPFPQAAPQRHPQQQFPHLHPLRLLHDVDDEPPLSFRPLLEDDDINEPPQQIQQQRSALRSSGSLELTPLPPPPTSLEPHRDRQQRSIVTGGEELQRSKQSLKGSRVSFEKPQQQGNNKAAESSDEDSFEDKRIGFQQQKATSVDHKGILKDLRHILANDNRRQFQAKKHVSLDIKGTRFLQDLLKDSSSEEEFHKTRREFQGRKHQSLDPRVTFKLDKVLQGSSTDSDEEGDDAEHKRLIHRPKDITKPVIIDLKDLESESDEDFLTSRQNFQQQRSISTDSRKSRRLYEMDEMGNKRGDNIRHAVPFVRQITEDGKPKLEVYRPTTNPIYIWTQVLAALSVSLGSLVVGFASAYTSPALVSMTNTNLTSFVVTPQAASWVGGIMPLAGLAGGIAGGPFIEYLGRRNTILATAVPFIISWLLIACAVNVVMVLCGRFLAGFCVGIASLSLPVYLGETVQPEVRGTLGLLPTAFGNIGILLCFVAGTYMDWSMLAFLGGTLPVPFLILMFLIPETPRWYVSRGREERARKALVWLRGKEADVEPELKGLMRSQADADRQATQNTMLELLKRSNLKPLSISLGLMFFQQLSGINAVIFYTVQIFQDAGSTIDGNVCTIIVGVVNFMATFIATVLIDRAGRKILLYVSNVAMILTLFVLGGFFYCKSTGMDTSNVGWLPLSCFVVYILGFSLGFGPIPWLMMGEILPAKIRGSAASVATAFNWSCTFVVTKSFQDMIDVMGAHGAFWMFGAICFVGLFFVIFYVPETQGKTLEDIERKMMGRVRRMSSVANIKPLSFNM.

A disordered region spans residues methionine 1–threonine 208. Topologically, residues methionine 1–tyrosine 398 are cytoplasmic. Residues lysine 28–glutamate 46 are compositionally biased toward basic and acidic residues. Positions serine 47–aspartate 59 are enriched in polar residues. Residues alanine 72–leucine 85 show a composition bias toward low complexity. 2 stretches are compositionally biased toward polar residues: residues proline 114–glycine 129 and lysine 177–alanine 187. Phosphoserine is present on residues serine 254, serine 255, and serine 256. Residues valine 286–isoleucine 307 form a disordered region. A phosphoserine mark is found at serine 326 and serine 328. Positions phenylalanine 332 to arginine 354 are disordered. Over residues arginine 336 to threonine 347 the composition is skewed to polar residues. The chain crosses the membrane as a helical span at residues isoleucine 399–alanine 419. Residues serine 420–serine 446 lie on the Extracellular side of the membrane. N-linked (GlcNAc...) asparagine glycosylation is present at asparagine 434. The helical transmembrane segment at tryptophan 447–isoleucine 467 threads the bilayer. The Cytoplasmic portion of the chain corresponds to glutamate 468–threonine 479. The helical transmembrane segment at alanine 480 to leucine 500 threads the bilayer. The Extracellular segment spans residues cysteine 501 to arginine 503. The chain crosses the membrane as a helical span at residues phenylalanine 504–threonine 524. The Cytoplasmic portion of the chain corresponds to valine 525–arginine 530. Residues glycine 531–alanine 551 form a helical membrane-spanning segment. Over glycine 552–serine 558 the chain is Extracellular. Residues methionine 559 to proline 579 traverse the membrane as a helical segment. Over glutamate 580–proline 642 the chain is Cytoplasmic. A helical transmembrane segment spans residues leucine 643–phenylalanine 663. Residues tyrosine 664–asparagine 679 lie on the Extracellular side of the membrane. The helical transmembrane segment at valine 680–isoleucine 700 threads the bilayer. Residues aspartate 701–lysine 706 are Cytoplasmic-facing. Residues isoleucine 707 to phenylalanine 727 traverse the membrane as a helical segment. Residues tyrosine 728–cysteine 746 lie on the Extracellular side of the membrane. A helical membrane pass occupies residues phenylalanine 747–glycine 767. Residues glutamate 768–lysine 773 are Cytoplasmic-facing. A helical transmembrane segment spans residues isoleucine 774 to threonine 794. Residues lysine 795–histidine 807 are Extracellular-facing. The chain crosses the membrane as a helical span at residues glycine 808 to valine 828. Over proline 829–methionine 863 the chain is Cytoplasmic. Phosphoserine occurs at positions 851 and 852.

Belongs to the major facilitator superfamily. Sugar transporter (TC 2.A.1.1) family. Trehalose transporter subfamily.

The protein resides in the cell membrane. In terms of biological role, low-capacity facilitative transporter for trehalose. Does not transport maltose, sucrose or lactose. Mediates the bidirectional transfer of trehalose. Responsible for the transport of trehalose synthesized in the fat body and the incorporation of trehalose into other tissues that require a carbon source, thereby regulating trehalose levels in the hemolymph. In Drosophila mojavensis (Fruit fly), this protein is Facilitated trehalose transporter Tret1.